A 266-amino-acid chain; its full sequence is Glucosamine-6-phosphate deaminase (266 aa).

D72 serves as the catalytic Proton acceptor; for enolization step. D141 acts as the For ring-opening step in catalysis. The active-site Proton acceptor; for ring-opening step is H143. E148 acts as the For ring-opening step in catalysis.

This sequence belongs to the glucosamine/galactosamine-6-phosphate isomerase family. NagB subfamily. As to quaternary structure, homohexamer; trimer of disulfide-linked dimers.

The catalysed reaction is alpha-D-glucosamine 6-phosphate + H2O = beta-D-fructose 6-phosphate + NH4(+). It functions in the pathway amino-sugar metabolism; N-acetylneuraminate degradation; D-fructose 6-phosphate from N-acetylneuraminate: step 5/5. With respect to regulation, allosterically activated by N-acetylglucosamine 6-phosphate (GlcNAc6P). In terms of biological role, catalyzes the reversible isomerization-deamination of glucosamine 6-phosphate (GlcN6P) to form fructose 6-phosphate (Fru6P) and ammonium ion. In Vibrio parahaemolyticus serotype O3:K6 (strain RIMD 2210633), this protein is Glucosamine-6-phosphate deaminase.